A 589-amino-acid chain; its full sequence is Sentrin-specific protease 2 (589 aa).

Positions 28-31 (KRRR) match the Nuclear localization signal motif. Residue Ser-32 is modified to Phosphoserine. The Nuclear localization signal signature appears at 46–51 (PAKRPR). Residues 155 to 176 (SEGCNRRPGGRRHSKGNPESSL) are disordered. A Nuclear export signal motif is present at residues 317-332 (LEPDLSEEVSARLRLG). Ser-333 and Ser-344 each carry phosphoserine. Residues 396-560 (RITRGDIQTL…FTCKYADYIS (165 aa)) are protease. Active-site residues include His-478 and Asp-495. Cys-548 acts as the Nucleophile in catalysis.

The protein belongs to the peptidase C48 family. In terms of assembly, binds to SUMO2 and SUMO3. Interacts with the C-terminal domain of NUP153 via its N-terminus. Interacts with MTA1. Polyubiquitinated; which leads to proteasomal degradation.

It localises to the nucleus. Its subcellular location is the nuclear pore complex. The protein resides in the nucleus membrane. It is found in the cytoplasm. Functionally, protease that catalyzes two essential functions in the SUMO pathway. The first is the hydrolysis of an alpha-linked peptide bond at the C-terminal end of the small ubiquitin-like modifier (SUMO) propeptides, SUMO1, SUMO2 and SUMO3 leading to the mature form of the proteins. The second is the deconjugation of SUMO1, SUMO2 and SUMO3 from targeted proteins, by cleaving an epsilon-linked peptide bond between the C-terminal glycine of the mature SUMO and the lysine epsilon-amino group of the target protein. May down-regulate CTNNB1 levels and thereby modulate the Wnt pathway. Deconjugates SUMO2 from MTA1. Plays a dynamic role in adipogenesis by desumoylating and promoting the stabilization of CEBPB. Acts as a regulator of the cGAS-STING pathway by catalyzing desumoylation of CGAS and STING1 during the late phase of viral infection. The chain is Sentrin-specific protease 2 from Homo sapiens (Human).